The primary structure comprises 384 residues: Troponin T (384 aa).

Residues 1 to 15 (MSDEEEYSEEEEEVP) are compositionally biased toward acidic residues. 4 disordered regions span residues 1–23 (MSDE…PRHS), 61–169 (RAKE…KEQL), 237–257 (LRHK…KYPP), and 313–384 (PKWF…EEEE). 2 stretches are compositionally biased toward basic and acidic residues: residues 61-74 (RAKE…LKDK) and 81-126 (MRAD…EKKR). Residues 316 to 327 (FGERPGKKKGDP) are compositionally biased toward basic and acidic residues. Over residues 328–384 (ESPEEEEVKADAGVDDELEEPTFEPEPEPEPEEEAAEEEAEEEEEEEEEEEEEEEEE) the composition is skewed to acidic residues.

Belongs to the troponin T family.

In terms of biological role, troponin T is the tropomyosin-binding subunit of troponin, the thin filament regulatory complex which confers calcium-sensitivity to striated muscle actomyosin ATPase activity. In Periplaneta americana (American cockroach), this protein is Troponin T (TNT).